Reading from the N-terminus, the 690-residue chain is Methionine--tRNA ligase 1 (690 aa).

Positions 11–21 (PYANGHIHIGH) match the 'HIGH' region motif. Positions 142, 145, 155, and 158 each coordinate Zn(2+). The 'KMSKS' region signature appears at 328-332 (KMSKS). Lysine 331 lines the ATP pocket. In terms of domain architecture, tRNA-binding spans 590–690 (DFSKVDLRVA…SGAKPGMRVH (101 aa)).

This sequence belongs to the class-I aminoacyl-tRNA synthetase family. MetG type 1 subfamily. In terms of assembly, homodimer. The cofactor is Zn(2+).

It localises to the cytoplasm. It carries out the reaction tRNA(Met) + L-methionine + ATP = L-methionyl-tRNA(Met) + AMP + diphosphate. Functionally, is required not only for elongation of protein synthesis but also for the initiation of all mRNA translation through initiator tRNA(fMet) aminoacylation. This chain is Methionine--tRNA ligase 1, found in Sorangium cellulosum (strain So ce56) (Polyangium cellulosum (strain So ce56)).